Consider the following 127-residue polypeptide: Holo-[acyl-carrier-protein] synthase (127 aa).

Mg(2+) contacts are provided by D9 and E58.

It belongs to the P-Pant transferase superfamily. AcpS family. Mg(2+) is required as a cofactor.

It localises to the cytoplasm. The enzyme catalyses apo-[ACP] + CoA = holo-[ACP] + adenosine 3',5'-bisphosphate + H(+). In terms of biological role, transfers the 4'-phosphopantetheine moiety from coenzyme A to a Ser of acyl-carrier-protein. The protein is Holo-[acyl-carrier-protein] synthase of Shewanella baltica (strain OS195).